The chain runs to 391 residues: Deoxyguanosinetriphosphate triphosphohydrolase-like protein (391 aa).

An HD domain is found at 62–198 (RLTHSLEVST…ASLADDISYI (137 aa)).

The protein belongs to the dGTPase family. Type 2 subfamily.

In Rickettsia akari (strain Hartford), this protein is Deoxyguanosinetriphosphate triphosphohydrolase-like protein.